The primary structure comprises 519 residues: tRNA pseudouridine synthase Pus10 (519 aa).

The tract at residues 70–98 (NENEEIDENTKNNEDTENKADDKSQSNEE) is disordered. The segment covering 77 to 98 (ENTKNNEDTENKADDKSQSNEE) has biased composition (basic and acidic residues). Residues 144–265 (NESEENESNI…NQKIYLQINP (122 aa)) enclose the THUMP domain. The active-site Nucleophile is the Asp334. Substrate is bound by residues Tyr398 and Tyr476.

It belongs to the pseudouridine synthase Pus10 family.

It carries out the reaction uridine(54) in tRNA = pseudouridine(54) in tRNA. It catalyses the reaction uridine(55) in tRNA = pseudouridine(55) in tRNA. In terms of biological role, responsible for synthesis of pseudouridine from uracil-54 and uracil-55 in the psi GC loop of transfer RNAs. In Methanococcus voltae (strain ATCC BAA-1334 / A3), this protein is tRNA pseudouridine synthase Pus10.